Consider the following 131-residue polypeptide: MFSDNSHCPDCGQQWFPSLELGHWLYQTELVENECYQVFLDRINRADYCPECYPDNPANRSLVLPWSFPLEWAPQNLTRWTFEKACHPFLLGPPLVRKKIHDSRVAGFNPALQLILSRTDKTLNKKLGQSK.

This is Torsin-1A-interacting protein 2, isoform IFRG15 (Tor1aip2) from Mus musculus (Mouse).